The sequence spans 197 residues: Cell division protein SepF (197 aa).

A disordered region spans residues 15–89 (EEEEVEGPEE…RMNNNSKNNS (75 aa)). A compositionally biased stretch (basic and acidic residues) spans 22–42 (PEERESSRSRERVQEREDYNR). Positions 43–73 (NENQATPQTFNNKQQAIKSVPQKNTLRSNTT) are enriched in polar residues. Positions 80 to 89 (RMNNNSKNNS) are enriched in low complexity.

The protein belongs to the SepF family. As to quaternary structure, homodimer. Interacts with FtsZ.

The protein localises to the cytoplasm. Cell division protein that is part of the divisome complex and is recruited early to the Z-ring. Probably stimulates Z-ring formation, perhaps through the cross-linking of FtsZ protofilaments. Its function overlaps with FtsA. This is Cell division protein SepF from Staphylococcus epidermidis (strain ATCC 35984 / DSM 28319 / BCRC 17069 / CCUG 31568 / BM 3577 / RP62A).